The primary structure comprises 274 residues: Dermonecrotic toxin SdSicTox-betaIIB2ii (274 aa).

Residue His-5 is part of the active site. The Mg(2+) site is built by Glu-25 and Asp-27. His-41 acts as the Nucleophile in catalysis. 2 cysteine pairs are disulfide-bonded: Cys-45–Cys-51 and Cys-47–Cys-190. Asp-85 provides a ligand contact to Mg(2+).

The protein belongs to the arthropod phospholipase D family. Class II subfamily. The cofactor is Mg(2+). Expressed by the venom gland.

It localises to the secreted. It catalyses the reaction an N-(acyl)-sphingosylphosphocholine = an N-(acyl)-sphingosyl-1,3-cyclic phosphate + choline. It carries out the reaction an N-(acyl)-sphingosylphosphoethanolamine = an N-(acyl)-sphingosyl-1,3-cyclic phosphate + ethanolamine. The enzyme catalyses a 1-acyl-sn-glycero-3-phosphocholine = a 1-acyl-sn-glycero-2,3-cyclic phosphate + choline. The catalysed reaction is a 1-acyl-sn-glycero-3-phosphoethanolamine = a 1-acyl-sn-glycero-2,3-cyclic phosphate + ethanolamine. Dermonecrotic toxins cleave the phosphodiester linkage between the phosphate and headgroup of certain phospholipids (sphingolipid and lysolipid substrates), forming an alcohol (often choline) and a cyclic phosphate. This toxin acts on sphingomyelin (SM). It may also act on ceramide phosphoethanolamine (CPE), lysophosphatidylcholine (LPC) and lysophosphatidylethanolamine (LPE), but not on lysophosphatidylserine (LPS), and lysophosphatidylglycerol (LPG). It acts by transphosphatidylation, releasing exclusively cyclic phosphate products as second products. Induces dermonecrosis, hemolysis, increased vascular permeability, edema, inflammatory response, and platelet aggregation. In Sicarius cf. damarensis (strain GJB-2008) (Six-eyed sand spider), this protein is Dermonecrotic toxin SdSicTox-betaIIB2ii.